The chain runs to 532 residues: Bifunctional purine biosynthesis protein PurH (532 aa).

In terms of domain architecture, MGS-like spans 1 to 149; it reads MTDPAPLTRA…KNHGAVTVLT (149 aa).

The protein belongs to the PurH family.

It catalyses the reaction (6R)-10-formyltetrahydrofolate + 5-amino-1-(5-phospho-beta-D-ribosyl)imidazole-4-carboxamide = 5-formamido-1-(5-phospho-D-ribosyl)imidazole-4-carboxamide + (6S)-5,6,7,8-tetrahydrofolate. The enzyme catalyses IMP + H2O = 5-formamido-1-(5-phospho-D-ribosyl)imidazole-4-carboxamide. Its pathway is purine metabolism; IMP biosynthesis via de novo pathway; 5-formamido-1-(5-phospho-D-ribosyl)imidazole-4-carboxamide from 5-amino-1-(5-phospho-D-ribosyl)imidazole-4-carboxamide (10-formyl THF route): step 1/1. It functions in the pathway purine metabolism; IMP biosynthesis via de novo pathway; IMP from 5-formamido-1-(5-phospho-D-ribosyl)imidazole-4-carboxamide: step 1/1. This Jannaschia sp. (strain CCS1) protein is Bifunctional purine biosynthesis protein PurH.